A 234-amino-acid polypeptide reads, in one-letter code: RNA chaperone ProQ (234 aa).

Residues 104–130 (LEEAKARVQAQRDARKREAAENGEKRE) show a composition bias toward basic and acidic residues. Positions 104 to 186 (LEEAKARVQA…QRSTPVTSLE (83 aa)) are disordered. Basic residues predominate over residues 131-142 (PRRPRPAGKKPT). Composition is skewed to basic and acidic residues over residues 143-156 (ARRD…EVRK) and 163-176 (TSER…ETTE). The span at 177–186 (QRSTPVTSLE) shows a compositional bias: polar residues.

Belongs to the ProQ family.

It localises to the cytoplasm. RNA chaperone with significant RNA binding, RNA strand exchange and RNA duplexing activities. May regulate ProP activity through an RNA-based, post-transcriptional mechanism. This Edwardsiella ictaluri (strain 93-146) protein is RNA chaperone ProQ.